A 306-amino-acid chain; its full sequence is Nuclear egress protein 1 (306 aa).

The tract at residues 1 to 49 (MYDTDPHRRGSRPGPYHGKERRRSRSSAAGGTLGVVRRASRKSLPPHAR) is disordered. Residues 106–225 (CLTLSGMGYY…YVIFPGTSAH (120 aa)) form a CCCH-type zinc finger.

Belongs to the herpesviridae NEC1 protein family. As to quaternary structure, forms a heterohexameric complex with NEC2. Interacts with capsid vertex specific component 2/CVC2; this interaction directs the capsid to the host inner nuclear membrane to initiate budding. Phosphorylated at serine residues in the N-terminus. This phosphorylation regulates the localization within the inner nuclear membrane.

It is found in the host nucleus inner membrane. Plays an essential role in virion nuclear egress, the first step of virion release from infected cell. Within the host nucleus, NEC1 interacts with the newly formed capsid through the vertexes and directs it to the inner nuclear membrane by associating with NEC2. Induces the budding of the capsid at the inner nuclear membrane as well as its envelopment into the perinuclear space. There, the NEC1/NEC2 complex promotes the fusion of the enveloped capsid with the outer nuclear membrane and the subsequent release of the viral capsid into the cytoplasm where it will reach the secondary budding sites in the host Golgi or trans-Golgi network. This is Nuclear egress protein 1 from Human herpesvirus 1 (strain 17) (HHV-1).